The primary structure comprises 120 residues: Protein CcdB (120 aa).

The Response regulatory domain maps to 3–118 (RVLVVDDAKF…KVLEAVSRVM (116 aa)). Asp-53 is modified (4-aspartylphosphate).

In Bacillus subtilis (strain 168), this protein is Protein CcdB (ccdB).